The primary structure comprises 441 residues: Polycomb protein EED (441 aa).

The interval 1 to 72 is disordered; it reads MSEREVSTAP…PGRKSWGKGK (72 aa). Ser-2 bears the N-acetylserine mark. 2 positions are modified to phosphoserine: Ser-2 and Ser-34. Polar residues predominate over residues 45–61; sequence ESGTNTERPDTPTNTPN. Thr-55 is subject to Phosphothreonine. Lys-66 is subject to N6,N6,N6-trimethyllysine; alternate. Lys-66 is subject to N6,N6-dimethyllysine; alternate. Lys-66 is modified (N6-methyllysine; alternate). The tract at residues 81 to 441 is interaction with EZH2; sequence SFKCVNSLKE…ASIWRWDRLR (361 aa). 4 WD repeats span residues 91–134, 142–185, 188–228, and 234–275; these read DHNQ…EIRL, DADE…CIKH, GHGN…LVAI, and GHRD…NAIK. Required for interaction with the matrix protein MA of HIV-1 stretches follow at residues 149 to 303 and 301 to 441; these read TCAW…STRD and TRDI…DRLR. N6,N6,N6-trimethyllysine; alternate occurs at positions 197, 268, and 284. N6,N6-dimethyllysine; alternate is present on residues Lys-197, Lys-268, and Lys-284. N6-methyllysine; alternate occurs at positions 197, 268, and 284. WD repeat units lie at residues 304-341, 359-399, and 408-441; these read IHRN…DDID, SQCD…PHKA, and KCGA…DRLR.

Belongs to the WD repeat ESC family. Component of the PRC2/EED-EZH2 complex, which includes EED, EZH2, SUZ12, RBBP4 and RBBP7 and possibly AEBP2. The minimum components required for methyltransferase activity of the PRC2/EED-EZH2 complex are EED, EZH2 and SUZ12. Component of the PRC2/EED-EZH1 complex, which includes EED, EZH1, SUZ12, RBBP4 and AEBP2. The PRC2 complex may also interact with DNMT1, DNMT3A, DNMT3B and PHF1 via the EZH2 subunit and with SIRT1 via the SUZ12 subunit. Interacts with HDAC, HDAC2, histone H1 and YY1. May interact with ITGA4, ITGAE and ITGB7. Interacts with CDYL. Interacts with BMAL1. Interacts with KMT2A/MLL1. In terms of assembly, (Microbial infection) May interact with the MA protein of HIV-1. In terms of processing, methylated. Binding to histone H1 'Lys-26' promotes mono-, di-, and trimethylation of internal lysines. In terms of tissue distribution, expressed in brain, colon, heart, kidney, liver, lung, muscle, ovary, peripheral blood leukocytes, pancreas, placenta, prostate, spleen, small intestine, testis, thymus and uterus. Appears to be overexpressed in breast and colon cancer.

The protein resides in the nucleus. Its subcellular location is the chromosome. Its function is as follows. Polycomb group (PcG) protein. Component of the PRC2/EED-EZH2 complex, which methylates 'Lys-9' and 'Lys-27' of histone H3, leading to transcriptional repression of the affected target gene. Also recognizes 'Lys-26' trimethylated histone H1 with the effect of inhibiting PRC2 complex methyltransferase activity on nucleosomal histone H3 'Lys-27', whereas H3 'Lys-27' recognition has the opposite effect, enabling the propagation of this repressive mark. The PRC2/EED-EZH2 complex may also serve as a recruiting platform for DNA methyltransferases, thereby linking two epigenetic repression systems. Genes repressed by the PRC2/EED-EZH2 complex include HOXC8, HOXA9, MYT1 and CDKN2A. The chain is Polycomb protein EED from Homo sapiens (Human).